Here is a 142-residue protein sequence, read N- to C-terminus: Large ribosomal subunit protein uL13 (142 aa).

This sequence belongs to the universal ribosomal protein uL13 family. In terms of assembly, part of the 50S ribosomal subunit.

This protein is one of the early assembly proteins of the 50S ribosomal subunit, although it is not seen to bind rRNA by itself. It is important during the early stages of 50S assembly. In Shewanella frigidimarina (strain NCIMB 400), this protein is Large ribosomal subunit protein uL13.